Reading from the N-terminus, the 423-residue chain is Gamma-glutamyl phosphate reductase (423 aa).

It belongs to the gamma-glutamyl phosphate reductase family.

Its subcellular location is the cytoplasm. It carries out the reaction L-glutamate 5-semialdehyde + phosphate + NADP(+) = L-glutamyl 5-phosphate + NADPH + H(+). It participates in amino-acid biosynthesis; L-proline biosynthesis; L-glutamate 5-semialdehyde from L-glutamate: step 2/2. In terms of biological role, catalyzes the NADPH-dependent reduction of L-glutamate 5-phosphate into L-glutamate 5-semialdehyde and phosphate. The product spontaneously undergoes cyclization to form 1-pyrroline-5-carboxylate. The polypeptide is Gamma-glutamyl phosphate reductase (Paramagnetospirillum magneticum (strain ATCC 700264 / AMB-1) (Magnetospirillum magneticum)).